The chain runs to 1071 residues: Myosin IF heavy chain (1071 aa).

Residues 40 to 736 (VGLTDMCFLE…TLFHFEELRQ (697 aa)) enclose the Myosin motor domain. ATP is bound at residue 134-141 (GESGSGKT). The interval 610-632 (INDLIGKLNTCQPHYIRCIKSNE) is actin-binding. In terms of domain architecture, IQ spans 739–768 (LPSIVITIQRVWRGYKVRKWYKQELQRLRE). The region spanning 870–1069 (SRKKEWDCRR…KGNTAIVYYN (200 aa)) is the TH1 domain.

It belongs to the TRAFAC class myosin-kinesin ATPase superfamily. Myosin family. Myosin I heavy chain is single-headed. Dimer of a heavy and a light chain. Inability to self-assemble into filaments.

In terms of biological role, myosin is a protein that binds to actin and has ATPase activity that is activated by actin. The polypeptide is Myosin IF heavy chain (myoF) (Dictyostelium discoideum (Social amoeba)).